The sequence spans 185 residues: 4-nitrophenol 4-monooxygenase/4-nitrocatechol 2-monooxygenase, reductase component (185 aa).

The protein belongs to the non-flavoprotein flavin reductase family. As to quaternary structure, the 4-NP/4-NCA monooxygenase is composed of an oxygenase component NpcA and a reductase component NpcB.

The enzyme catalyses 4-nitrophenol + NADH + O2 + H(+) = 4-nitrocatechol + NAD(+) + H2O. It carries out the reaction 4-nitrocatechol + NADPH + O2 = 2-hydroxy-1,4-benzoquinone + nitrite + NADP(+) + H2O. It catalyses the reaction 4-nitrocatechol + NADH + O2 = 2-hydroxy-1,4-benzoquinone + nitrite + NAD(+) + H2O. The protein operates within aromatic compound metabolism. Its pathway is xenobiotic degradation. With respect to regulation, inhibited by methimazole. In terms of biological role, involved in the degradation of para-nitrophenol (4-NP). Catalyzes both the initial hydroxylation of 4-NP to produce 4-nitrocatechol (4-NCA) and the subsequent oxidative release of the nitro group from 4-NCA to produce 2-hydroxy-1,4-benzoquinone. It can also use 4-nitroresorcinol as substrate with a rate of nitrite release similar to that observed with the two physiological substrates, 4-PN and 4-NCA. The sequence is that of 4-nitrophenol 4-monooxygenase/4-nitrocatechol 2-monooxygenase, reductase component (npcB) from Rhodococcus opacus (Nocardia opaca).